The chain runs to 259 residues: Steroidogenic acute regulatory-like protein 1 (259 aa).

Positions 1–20 (MTLLPFTCLILLYSLGSVMS) are cleaved as a signal peptide. The region spanning 43-254 (YATALKTCGE…NRRHFQNLKA (212 aa)) is the START domain.

This is Steroidogenic acute regulatory-like protein 1 (strl-1) from Caenorhabditis elegans.